A 342-amino-acid chain; its full sequence is uncharacterized protein (342 aa).

Position 69 (Arg-69) interacts with substrate. His-176 acts as the Proton donor in catalysis. Residue Asp-240 coordinates substrate.

Belongs to the aldose epimerase family.

This is an uncharacterized protein from Saccharomyces cerevisiae (strain ATCC 204508 / S288c) (Baker's yeast).